We begin with the raw amino-acid sequence, 183 residues long: MYLIVGLGNIGEKYQYTRHNVGFLVIDEMAKNLQTSNVNNSNFQSTLLKSGYNLFAKPTTYMNNSGVAVHSIKEYYKIDLENIIVIHDDLDLPFGTVKFKIGGGHGGHNGLKSLDSHIGKDYIRVRIGIGKPQNKDDVANFVLSDFSKEELNKLEDIIKHTINAIEALKTADIDEVKSKFTLK.

Tyr14 is a tRNA binding site. The active-site Proton acceptor is His19. Residues Tyr61, Asn63, and Asn109 each coordinate tRNA.

Belongs to the PTH family. Monomer.

Its subcellular location is the cytoplasm. The enzyme catalyses an N-acyl-L-alpha-aminoacyl-tRNA + H2O = an N-acyl-L-amino acid + a tRNA + H(+). Hydrolyzes ribosome-free peptidyl-tRNAs (with 1 or more amino acids incorporated), which drop off the ribosome during protein synthesis, or as a result of ribosome stalling. Functionally, catalyzes the release of premature peptidyl moieties from peptidyl-tRNA molecules trapped in stalled 50S ribosomal subunits, and thus maintains levels of free tRNAs and 50S ribosomes. The chain is Peptidyl-tRNA hydrolase from Aliarcobacter butzleri (strain RM4018) (Arcobacter butzleri).